Here is a 402-residue protein sequence, read N- to C-terminus: Zinc finger protein 322 (402 aa).

The segment at 43 to 65 (YQCLECKQNFCENLALIMCERTH) adopts a C2H2-type 1; atypical zinc-finger fold. C2H2-type zinc fingers lie at residues 71 to 93 (YKCD…QRIH), 99 to 121 (YKCS…QRTH), 127 to 149 (YTCD…QRSH), 155 to 177 (YLCS…RRTH), 183 to 205 (FKCL…QRTH), 211 to 233 (YKCN…KRVH), 239 to 261 (YKCG…QRVH), and 267 to 289 (YKCL…QATH). The segment at 293-315 (FKCLEYEKSFNCSSDLIVHQRIH) adopts a C2H2-type 10; degenerate zinc-finger fold. Residues 351–373 (YKYTVCDKSFHQSSALLQHQTVH) form a C2H2-type 11; degenerate zinc finger. Ser-391 is subject to Phosphoserine.

The protein belongs to the krueppel C2H2-type zinc-finger protein family. In terms of assembly, interacts with POU5F1.

The protein resides in the cytoplasm. The protein localises to the nucleus. Its function is as follows. Transcriptional activator. Important for maintenance of pluripotency in embryonic stem cells. Binds directly to the POU5F1 distal enhancer and the NANOG proximal promoter, and enhances expression of both genes. Can also bind to numerous other gene promoters and regulates expression of many other pluripotency factors, either directly or indirectly. Promotes inhibition of MAPK signaling during embryonic stem cell differentiation. The protein is Zinc finger protein 322 (ZNF322) of Macaca fascicularis (Crab-eating macaque).